A 337-amino-acid polypeptide reads, in one-letter code: Delta-aminolevulinic acid dehydratase (337 aa).

K205 serves as the catalytic Schiff-base intermediate with substrate. Residues R215 and K229 each coordinate 5-aminolevulinate. Residue E245 coordinates Mg(2+). K260 acts as the Schiff-base intermediate with substrate in catalysis. 5-aminolevulinate contacts are provided by S286 and Y324.

The protein belongs to the ALAD family. In terms of assembly, homooctamer; formed by oligomerization of dimers. The cofactor is Mg(2+).

It carries out the reaction 2 5-aminolevulinate = porphobilinogen + 2 H2O + H(+). The protein operates within porphyrin-containing compound metabolism; protoporphyrin-IX biosynthesis; coproporphyrinogen-III from 5-aminolevulinate: step 1/4. Its activity is regulated as follows. Stimulated by magnesium ions. Its function is as follows. Catalyzes an early step in the biosynthesis of tetrapyrroles. Binds two molecules of 5-aminolevulinate per subunit, each at a distinct site, and catalyzes their condensation to form porphobilinogen. This is Delta-aminolevulinic acid dehydratase (hemB) from Pseudomonas aeruginosa (strain ATCC 15692 / DSM 22644 / CIP 104116 / JCM 14847 / LMG 12228 / 1C / PRS 101 / PAO1).